Reading from the N-terminus, the 72-residue chain is Large ribosomal subunit protein uL29 (72 aa).

The protein belongs to the universal ribosomal protein uL29 family.

In Prochlorococcus marinus (strain MIT 9301), this protein is Large ribosomal subunit protein uL29.